The chain runs to 359 residues: MASRYLTLAAALLASFLQVDIEANSWWSLAMNPVQIPEAYIVGAQPLCSQLAGLSPGQKKLCQLYQDHMQYIGEGAKTGIKECQYQFRHRRWNCSTVDNISVFGRVMQIGSRETAFTYSISAAGVVNAVSRACRAGELSTCGCSRARRPKDLQRDWLWGGCGDNLDYGYRFAKEFVDAREREKIHQKGSYESSRTLMNLHNNEAGRRTVYNLADVACKCHGVSGSCSLKTCWLQLADFRKVGDFLKEKYDSAASMKLNSRGKLVQVNSRFNPPTTNDLVYVDPSPDYCVRNESTGSMGTQGRLCNKTSEGMDGCELMCCGRGYDQFKTVQTERCHCKFHWCCYVKCKKCTEIVDQFVCK.

A signal peptide spans 1–20; the sequence is MASRYLTLAAALLASFLQVD. A disulfide bond links C83 and C94. N93 and N99 each carry an N-linked (GlcNAc...) asparagine glycan. 10 disulfide bridges follow: C133/C141, C143/C161, C217/C231, C219/C226, C288/C319, C304/C314, C318/C358, C334/C349, C336/C346, and C341/C342. S223 is lipidated: O-palmitoleoyl serine; by PORCN. N291 and N305 each carry an N-linked (GlcNAc...) asparagine glycan.

Belongs to the Wnt family. Post-translationally, palmitoleoylation is required for efficient binding to frizzled receptors. Depalmitoleoylation leads to Wnt signaling pathway inhibition.

It is found in the secreted. The protein resides in the extracellular space. The protein localises to the extracellular matrix. Its function is as follows. Ligand for members of the frizzled family of seven transmembrane receptors. Can activate or inhibit canonical Wnt signaling, depending on receptor context. Required during embryogenesis for extension of the primary anterior-posterior axis. The sequence is that of Protein Wnt-5a (WNT5A) from Pleurodeles waltl (Iberian ribbed newt).